The sequence spans 528 residues: Lanosterol 14-alpha demethylase (528 aa).

Cys470 contributes to the heme binding site.

This sequence belongs to the cytochrome P450 family. Heme is required as a cofactor.

The protein localises to the membrane. The enzyme catalyses a 14alpha-methyl steroid + 3 reduced [NADPH--hemoprotein reductase] + 3 O2 = a Delta(14) steroid + formate + 3 oxidized [NADPH--hemoprotein reductase] + 4 H2O + 4 H(+). The catalysed reaction is a 14alpha-methyl steroid + reduced [NADPH--hemoprotein reductase] + O2 = a 14alpha-hydroxymethyl steroid + oxidized [NADPH--hemoprotein reductase] + H2O + H(+). It carries out the reaction a 14alpha-hydroxymethyl steroid + reduced [NADPH--hemoprotein reductase] + O2 = a 14alpha-formyl steroid + oxidized [NADPH--hemoprotein reductase] + 2 H2O + H(+). It catalyses the reaction a 14alpha-formyl steroid + reduced [NADPH--hemoprotein reductase] + O2 = a Delta(14) steroid + formate + oxidized [NADPH--hemoprotein reductase] + H2O + 2 H(+). The enzyme catalyses lanosterol + 3 reduced [NADPH--hemoprotein reductase] + 3 O2 = 4,4-dimethyl-5alpha-cholesta-8,14,24-trien-3beta-ol + formate + 3 oxidized [NADPH--hemoprotein reductase] + 4 H2O + 4 H(+). The catalysed reaction is lanosterol + reduced [NADPH--hemoprotein reductase] + O2 = 32-hydroxylanosterol + oxidized [NADPH--hemoprotein reductase] + H2O + H(+). It carries out the reaction 32-hydroxylanosterol + reduced [NADPH--hemoprotein reductase] + O2 = 32-oxolanosterol + oxidized [NADPH--hemoprotein reductase] + 2 H2O + H(+). It catalyses the reaction 32-oxolanosterol + reduced [NADPH--hemoprotein reductase] + O2 = 4,4-dimethyl-5alpha-cholesta-8,14,24-trien-3beta-ol + formate + oxidized [NADPH--hemoprotein reductase] + H2O + 2 H(+). The enzyme catalyses eburicol + 3 reduced [NADPH--hemoprotein reductase] + 3 O2 = 14-demethyleburicol + formate + 3 oxidized [NADPH--hemoprotein reductase] + 4 H2O + 4 H(+). The catalysed reaction is eburicol + reduced [NADPH--hemoprotein reductase] + O2 = 32-hydroxyeburicol + oxidized [NADPH--hemoprotein reductase] + H2O + H(+). It carries out the reaction 32-hydroxyeburicol + reduced [NADPH--hemoprotein reductase] + O2 = 32-oxoeburicol + oxidized [NADPH--hemoprotein reductase] + 2 H2O + H(+). It catalyses the reaction 32-oxoeburicol + reduced [NADPH--hemoprotein reductase] + O2 = 14-demethyleburicol + formate + oxidized [NADPH--hemoprotein reductase] + H2O + 2 H(+). It participates in steroid biosynthesis; zymosterol biosynthesis; zymosterol from lanosterol: step 1/6. In terms of biological role, sterol 14alpha-demethylase that plays a critical role in the third module of ergosterol biosynthesis pathway, being ergosterol the major sterol component in fungal membranes that participates in a variety of functions. The third module or late pathway involves the ergosterol synthesis itself through consecutive reactions that mainly occur in the endoplasmic reticulum (ER) membrane. In filamentous fungi, during the initial step of this module, lanosterol (lanosta-8,24-dien-3beta-ol) can be metabolized to eburicol. Sterol 14alpha-demethylase catalyzes the three-step oxidative removal of the 14alpha-methyl group (C-32) of both these sterols in the form of formate, and converts eburicol and lanosterol to 14-demethyleburicol (4,4,24-trimethylergosta-8,14,24(28)-trienol) and 4,4-dimethyl-5alpha-cholesta-8,14,24-trien-3beta-ol, respectively, which are further metabolized by other enzymes in the pathway to ergosterol. Can also use substrates not intrinsic to fungi, such as 24,25-dihydrolanosterol (DHL), producing 4,4-dimethyl-8,14-cholestadien-3-beta-ol, but at lower rates than the endogenous substrates. This Candida tropicalis (Yeast) protein is Lanosterol 14-alpha demethylase (ERG11).